Here is a 1723-residue protein sequence, read N- to C-terminus: MRTGRVTPGLAAGLLLLLLRSFGLVEPSESSGNDPFTIVHENTGKCIQPLSDWVVAQDCSGTNNMLWKWVSQHRLFHLESQKCLGLDITKATDNLRMFSCDSTVMLWWKCEHHSLYTAAQYRLALKDGYAVANTNTSDVWKKGGSEENLCAQPYHEIYTRDGNSYGRPCEFPFLIGETWYHDCIHDEDHSGPWCATTLSYEYDQKWGICLLPESGCEGNWEKNEQIGSCYQFNNQEILSWKEAYVSCQNQGADLLSIHSAAELAYITGKEDIARLVWLGLNQLYSARGWEWSDFRPLKFLNWDPGTPVAPVIGGSSCARMDTESGLWQSVSCESQQPYVCKKPLNNTLELPDVWTYTDTHCHVGWLPNNGFCYLLANESSSWDAAHLKCKAFGADLISMHSLADVEVVVTKLHNGDVKKEIWTGLKNTNSPALFQWSDGTEVTLTYWNENEPSVPFNKTPNCVSYLGKLGQWKVQSCEKKLRYVCKKKGEITKDAESDKLCPPDEGWKRHGETCYKIYEKEAPFGTNCNLTITSRFEQEFLNYMMKNYDKSLRKYFWTGLRDPDSRGEYSWAVAQGVKQAVTFSNWNFLEPASPGGCVAMSTGKTLGKWEVKNCRSFRALSICKKVSEPQEPEEAAPKPDDPCPEGWHTFPSSLSCYKVFHIERIVRKRNWEEAERFCQALGAHLPSFSRREEIKDFVHLLKDQFSGQRWLWIGLNKRSPDLQGSWQWSDRTPVSAVMMEPEFQQDFDIRDCAAIKVLDVPWRRVWHLYEDKDYAYWKPFACDAKLEWVCQIPKGSTPQMPDWYNPERTGIHGPPVIIEGSEYWFVADPHLNYEEAVLYCASNHSFLATITSFTGLKAIKNKLANISGEEQKWWVKTSENPIDRYFLGSRRRLWHHFPMTFGDECLHMSAKTWLVDLSKRADCNAKLPFICERYNVSSLEKYSPDPAAKVQCTEKWIPFQNKCFLKVNSGPVTFSQASGICHSYGGTLPSVLSRGEQDFIISLLPEMEASLWIGLRWTAYERINRWTDNRELTYSNFHPLLVGRRLSIPTNFFDDESHFHCALILNLKKSPLTGTWNFTSCSERHSLSLCQKYSETEDGQPWENTSKTVKYLNNLYKIISKPLTWHGALKECMKEKMRLVSITDPYQQAFLAVQATLRNSSFWIGLSSQDDELNFGWSDGKRLQFSNWAGSNEQLDDCVILDTDGFWKTADCDDNQPGAICYYPGNETEEEVRALDTAKCPSPVQSTPWIPFQNSCYNFMITNNRHKTVTPEEVQSTCEKLHSKAHSLSIRNEEENTFVVEQLLYFNYIASWVMLGITYENNSLMWFDKTALSYTHWRTGRPTVKNGKFLAGLSTDGFWDIQSFNVIEETLHFYQHSISACKIEMVDYEDKHNGTLPQFIPYKDGVYSVIQKKVTWYEALNACSQSGGELASVHNPNGKLFLEDIVNRDGFPLWVGLSSHDGSESSFEWSDGRAFDYVPWQSLQSPGDCVVLYPKGIWRREKCLSVKDGAICYKPTKDKKLIFHVKSSKCPVAKRDGPQWVQYGGHCYASDQVLHSFSEAKQVCQELDHSATVVTIADENENKFVSRLMRENYNITMRVWLGLSQHSLDQSWSWLDGLDVTFVKWENKTKDGDGKCSILIASNETWRKVHCSRGYARAVCKIPLSPDYTGIAILFAVLCLLGLISLAIWFLLQRSHIRWTGFSSVRYEHGTNEDEVMLPSFHD.

Residues 1–27 form the signal peptide; it reads MRTGRVTPGLAAGLLLLLLRSFGLVEP. The Extracellular segment spans residues 28–1667; the sequence is SESSGNDPFT…AVCKIPLSPD (1640 aa). In terms of domain architecture, Ricin B-type lectin spans 33–182; sequence NDPFTIVHEN…FLIGETWYHD (150 aa). A glycan (N-linked (GlcNAc...) asparagine) is linked at N135. A Fibronectin type-II domain is found at 164 to 211; that stretch reads SYGRPCEFPFLIGETWYHDCIHDEDHSGPWCATTLSYEYDQKWGICLL. Cystine bridges form between C169–C194, C183–C209, C247–C340, and C317–C332. Residues 225-341 form the C-type lectin 1 domain; that stretch reads QIGSCYQFNN…CESQQPYVCK (117 aa). N345 and N377 each carry an N-linked (GlcNAc...) asparagine glycan. C-type lectin domains are found at residues 368–486, 493–625, and 652–791; these read NNGF…YVCK, KDAE…ICKK, and SSLS…WVCQ. Intrachain disulfides connect C389–C485 and C462–C477. Residue N529 is glycosylated (N-linked (GlcNAc...) asparagine). 3 cysteine pairs are disulfide-bonded: C597-C614, C678-C790, and C752-C782. N-linked (GlcNAc...) asparagine glycans are attached at residues N843 and N865. Y934 is modified (phosphotyrosine). N935, N1077, and N1104 each carry an N-linked (GlcNAc...) asparagine glycan. The C-type lectin 5 domain occupies 959–1092; the sequence is FQNKCFLKVN…ERHSLSLCQK (134 aa). An intrachain disulfide couples C1061 to C1081. A C-type lectin 6 domain is found at 1111–1223; that stretch reads YLNNLYKIIS…DNQPGAICYY (113 aa). Residues C1198 and C1212 are joined by a disulfide bond. Residues N1226, N1321, and N1393 are each glycosylated (N-linked (GlcNAc...) asparagine). The region spanning 1252-1375 is the C-type lectin 7 domain; the sequence is FQNSCYNFMI…VIEETLHFYQ (124 aa). C-type lectin domains lie at 1402 to 1514 and 1543 to 1662; these read YKDG…ICYK and YGGH…VCKI. A disulfide bridge links C1489 with C1503. N-linked (GlcNAc...) asparagine glycans are attached at residues N1594 and N1627. C1636 and C1651 are joined by a disulfide. Residues 1668–1692 form a helical membrane-spanning segment; that stretch reads YTGIAILFAVLCLLGLISLAIWFLL. Residues 1693–1723 are Cytoplasmic-facing; that stretch reads QRSHIRWTGFSSVRYEHGTNEDEVMLPSFHD. 2 positions are modified to phosphoserine: S1704 and S1720.

N-glycosylated. In terms of tissue distribution, expressed in dendritic and thymic epithelial cells and lymph nodes.

It is found in the membrane. In terms of biological role, acts as an endocytic receptor to direct captured antigens from the extracellular space to a specialized antigen-processing compartment. Causes reduced proliferation of B lymphocytes. The sequence is that of Lymphocyte antigen 75 (Ly75) from Mus musculus (Mouse).